Consider the following 389-residue polypeptide: Probable peptidoglycan glycosyltransferase FtsW (389 aa).

Topologically, residues 1–14 (MPIRDWRQQSQRWP) are cytoplasmic. A helical transmembrane segment spans residues 15–35 (IDYWLIGALAILITLGLTMVA). The Periplasmic portion of the chain corresponds to 36–57 (SSSIAISEKRFGDPTHYLLRQM). Residues 58–78 (FSMGLGLMAAYIVLKIPLSFW) traverse the membrane as a helical segment. At 79-84 (RKHRGQ) the chain is on the cytoplasmic side. Residues 85 to 105 (LFIVGLVLLVLVLVFGREING) traverse the membrane as a helical segment. Residues 106-111 (SKRWLP) lie on the Periplasmic side of the membrane. Residues 112–132 (LVLMNFQVSEFMKIAVVVFMA) traverse the membrane as a helical segment. Topologically, residues 133-144 (GYLDRHATAVRE) are cytoplasmic. Residues 145–165 (SFEAVIRLALPFGVMAILLLL) form a helical membrane-spanning segment. Topologically, residues 166 to 168 (EPD) are periplasmic. The helical transmembrane segment at 169–189 (FGSTFVIAVIITGMLLIAGAP) threads the bilayer. Over 190-191 (WR) the chain is Cytoplasmic. The helical transmembrane segment at 192 to 212 (FFVMTVLPIATLLVMMVITSP) threads the bilayer. Topologically, residues 213 to 268 (YRMARVTNFLDPWSDPFGNGYQLTQALIASGRGEWFGVGIGESVQKLLYLPDAHTD) are periplasmic. Residues 269-289 (FLFSIYAEEYGLIGVAFLALL) traverse the membrane as a helical segment. Residues 290–310 (YLTLLYRCFRIGRKAFNQTHY) are Cytoplasmic-facing. The helical transmembrane segment at 311-331 (FGGLIAYGVGIWIVLQAMINM) threads the bilayer. Over 332–344 (GVNLGLFPTKGLT) the chain is Periplasmic. The chain crosses the membrane as a helical span at residues 345–365 (LPFMSYGGSSVLMLFIGVAMV). The Cytoplasmic portion of the chain corresponds to 366–389 (LRVDLETRQAVLEHSVDESGQGKR).

Belongs to the SEDS family. FtsW subfamily.

It localises to the cell inner membrane. The enzyme catalyses [GlcNAc-(1-&gt;4)-Mur2Ac(oyl-L-Ala-gamma-D-Glu-L-Lys-D-Ala-D-Ala)](n)-di-trans,octa-cis-undecaprenyl diphosphate + beta-D-GlcNAc-(1-&gt;4)-Mur2Ac(oyl-L-Ala-gamma-D-Glu-L-Lys-D-Ala-D-Ala)-di-trans,octa-cis-undecaprenyl diphosphate = [GlcNAc-(1-&gt;4)-Mur2Ac(oyl-L-Ala-gamma-D-Glu-L-Lys-D-Ala-D-Ala)](n+1)-di-trans,octa-cis-undecaprenyl diphosphate + di-trans,octa-cis-undecaprenyl diphosphate + H(+). The protein operates within cell wall biogenesis; peptidoglycan biosynthesis. In terms of biological role, peptidoglycan polymerase that is essential for cell division. The chain is Probable peptidoglycan glycosyltransferase FtsW from Hydrogenovibrio crunogenus (strain DSM 25203 / XCL-2) (Thiomicrospira crunogena).